Here is a 554-residue protein sequence, read N- to C-terminus: Potassium-transporting ATPase potassium-binding subunit (554 aa).

A run of 10 helical transmembrane segments spans residues 1-21, 60-80, 131-151, 174-194, 246-266, 279-299, 375-395, 412-432, 481-501, and 525-545; these read MSPV…LALA, PAYL…LYVL, GLAV…VALV, VRVL…CGAI, PGPF…FALT, GYAI…LMMW, GLYG…LMVG, FAAC…AAAM, IGIV…ALAG, and GLLV…ALAL.

The protein belongs to the KdpA family. As to quaternary structure, the system is composed of three essential subunits: KdpA, KdpB and KdpC.

It is found in the cell membrane. Its function is as follows. Part of the high-affinity ATP-driven potassium transport (or Kdp) system, which catalyzes the hydrolysis of ATP coupled with the electrogenic transport of potassium into the cytoplasm. This subunit binds the extracellular potassium ions and delivers the ions to the membrane domain of KdpB through an intramembrane tunnel. This chain is Potassium-transporting ATPase potassium-binding subunit, found in Streptomyces avermitilis (strain ATCC 31267 / DSM 46492 / JCM 5070 / NBRC 14893 / NCIMB 12804 / NRRL 8165 / MA-4680).